A 323-amino-acid polypeptide reads, in one-letter code: Ferrochelatase (323 aa).

Residues H196 and E277 each contribute to the Fe cation site.

This sequence belongs to the ferrochelatase family.

It localises to the cytoplasm. The catalysed reaction is heme b + 2 H(+) = protoporphyrin IX + Fe(2+). It participates in porphyrin-containing compound metabolism; protoheme biosynthesis; protoheme from protoporphyrin-IX: step 1/1. Catalyzes the ferrous insertion into protoporphyrin IX. The protein is Ferrochelatase of Haemophilus influenzae (strain ATCC 51907 / DSM 11121 / KW20 / Rd).